We begin with the raw amino-acid sequence, 312 residues long: Elongation factor Ts (312 aa).

Residues 84 to 87 (TDFV) form an involved in Mg(2+) ion dislocation from EF-Tu region.

Belongs to the EF-Ts family.

It is found in the cytoplasm. Its function is as follows. Associates with the EF-Tu.GDP complex and induces the exchange of GDP to GTP. It remains bound to the aminoacyl-tRNA.EF-Tu.GTP complex up to the GTP hydrolysis stage on the ribosome. The sequence is that of Elongation factor Ts from Caulobacter vibrioides (strain ATCC 19089 / CIP 103742 / CB 15) (Caulobacter crescentus).